We begin with the raw amino-acid sequence, 2089 residues long: Rho GTPase-activating protein 32 (2089 aa).

Residues 24-52 (TQLTDGDEEEREESFRKMKSSIHSEEDDF) are disordered. Residues 131–245 (GSIQLSLSEE…LTWMEIDNKG (115 aa)) enclose the PX; atypical domain. The SH3 domain occupies 259–321 (PAVGAAHVIK…PGHCVELINQ (63 aa)). A Rho-GAP domain is found at 372 to 567 (CDLGEHLLNS…FILNHVDVLF (196 aa)). Residues Ser-706, Ser-709, Ser-732, and Ser-738 each carry the phosphoserine modification. Over residues 828–837 (KLSPSKKDAE) the composition is skewed to basic and acidic residues. Residues 828–858 (KLSPSKKDAEAGGSQSQTPGSTASSEPVSPV) form a disordered region. Residues 840-854 (GSQSQTPGSTASSEP) show a composition bias toward polar residues. A phosphoserine mark is found at Ser-852, Ser-856, Ser-892, and Ser-952. 3 disordered regions span residues 955-1037 (QLQL…PPPP), 1119-1141 (CNQP…TDSG), and 1154-1197 (LHRN…SVST). Composition is skewed to polar residues over residues 998-1014 (LSSQ…QTGA) and 1132-1141 (PTQSNTTDSG). Residues 1175 to 1191 (DSEKSDDHGSFPEDHAG) show a composition bias toward basic and acidic residues. Ser-1206 bears the Phosphoserine mark. Residues 1221-1368 (GTSVDKPHHS…GDPAPIFLSD (148 aa)) form a disordered region. The span at 1225 to 1235 (DKPHHSSELTD) shows a compositional bias: basic and acidic residues. The segment covering 1262–1275 (TATMAYMMATPARA) has biased composition (low complexity). The segment at 1395 to 1714 (RAPPLHLRAE…YNYAGLPPRP (320 aa)) is interaction with GAB2. Asymmetric dimethylarginine occurs at positions 1526 and 1536. The residue at position 1588 (Ser-1588) is a Phosphoserine. The segment at 1688 to 2089 (SSRDFAFYNP…PHPDTQIHAE (402 aa)) is interaction with FYN. Disordered regions lie at residues 1801–1865 (PGKT…QSSL) and 1881–2002 (RAHQ…LERD). A compositionally biased stretch (basic and acidic residues) spans 1826-1841 (GDERFYRKHPESEFDR). Polar residues predominate over residues 1850–1865 (STQAEKPSLPQKQSSL). The segment covering 1881–1892 (RAHQEASHRQLC) has biased composition (basic and acidic residues). Residues 1918-1939 (SEPSNYHNSGKYMTSGQGSLTL) show a composition bias toward polar residues. Basic and acidic residues-rich tracts occupy residues 1940–1954 (NHKE…DRPR) and 1961–1975 (PEKH…EEHF). An Omega-N-methylarginine modification is found at Arg-2039.

The protein belongs to the PX domain-containing GAP family. As to quaternary structure, interacts with NTRK1 (via cytoplasmic domain); the interaction is independent of the phosphorylation state of NTRK1. Interacts with SHC3 (via SH2 domain). Interacts with RASA1 (via SH3 domain); the interaction is necessary for the Ras activation and cell transforming activities of ARHGAP32. Interacts with GAB1 and GAB2. Interacts with CRK and CRKL. Found in a complex with CRKL and BCAR1; upon EGF stimulation BCAR1 may be replaced by EGFR. Interacts with NCK1 (via SH3 domain); NCK1 recruits phosphorylated BCAR1 to the complex. Isoform 2 interacts with FYN; the interaction appears to be dependent on tyrosine phosphorylation of ARHGAP32. Interacts with EGFR; the interaction requires EGF stimulation and is increased by SHC3. Interacts with CDC42; the interaction requires constitutively active CDC42. Interacts with CTNNB1, DLG4, CDH2 and GRIN2B. Interacts with GPHN. In terms of processing, isoform 2 is phosphorylated on multiple tyrosine residues by FYN. Phosphorylated tyrosine residues undergo dephosphorylation after stimulation of NMDA receptors. Phosphorylated in vitro by CaMK2 in the presence of calmodulin and calcium; which inhibits GAP activity. In terms of tissue distribution, isoform 1 and isoform 2 are highly expressed in brain, specially in cortex, corpus striatum, hippocampus and thalamus. Low levels in cerebellum, colon, small intestine, and kidney.

The protein resides in the postsynaptic density. It localises to the cell projection. Its subcellular location is the dendritic spine. The protein localises to the cytoplasm. It is found in the cell cortex. The protein resides in the endosome membrane. It localises to the golgi apparatus membrane. Its subcellular location is the endoplasmic reticulum membrane. The protein localises to the membrane. GTPase-activating protein (GAP) promoting GTP hydrolysis on RHOA, CDC42 and RAC1 small GTPases. May be involved in the differentiation of neuronal cells during the formation of neurite extensions. Involved in NMDA receptor activity-dependent actin reorganization in dendritic spines. May mediate cross-talks between Ras- and Rho-regulated signaling pathways in cell growth regulation. Isoform 2 has higher GAP activity. This is Rho GTPase-activating protein 32 (Arhgap32) from Mus musculus (Mouse).